Reading from the N-terminus, the 376-residue chain is uncharacterized protein (376 aa).

The first 31 residues, 1–31 (MSRHKVYKAISSYVIIAIIIIAIVAVVGVLL), serve as a signal peptide directing secretion. The interval 37 to 57 (SSSSVTSTTTPTTSSSVSPSS) is disordered.

Belongs to the bacterial solute-binding protein 1 family. WtpA subfamily.

This is an uncharacterized protein from Sulfurisphaera tokodaii (strain DSM 16993 / JCM 10545 / NBRC 100140 / 7) (Sulfolobus tokodaii).